We begin with the raw amino-acid sequence, 638 residues long: Chaperone protein DnaK (638 aa).

Threonine 197 carries the phosphothreonine; by autocatalysis modification. Residues 598-638 form a disordered region; sequence QQSAPSGAAAGPDEGAPSGSGGTSGTRGGDDVIDAEFTETK. Positions 615–624 are enriched in gly residues; the sequence is SGSGGTSGTR. Over residues 628–638 the composition is skewed to acidic residues; that stretch reads DVIDAEFTETK.

Belongs to the heat shock protein 70 family.

In terms of biological role, acts as a chaperone. In Gloeobacter violaceus (strain ATCC 29082 / PCC 7421), this protein is Chaperone protein DnaK.